Reading from the N-terminus, the 270-residue chain is Putative pyruvate, phosphate dikinase regulatory protein (270 aa).

151–158 contacts ADP; the sequence is GVSRTSKT.

Belongs to the pyruvate, phosphate/water dikinase regulatory protein family. PDRP subfamily.

The catalysed reaction is N(tele)-phospho-L-histidyl/L-threonyl-[pyruvate, phosphate dikinase] + ADP = N(tele)-phospho-L-histidyl/O-phospho-L-threonyl-[pyruvate, phosphate dikinase] + AMP + H(+). The enzyme catalyses N(tele)-phospho-L-histidyl/O-phospho-L-threonyl-[pyruvate, phosphate dikinase] + phosphate + H(+) = N(tele)-phospho-L-histidyl/L-threonyl-[pyruvate, phosphate dikinase] + diphosphate. In terms of biological role, bifunctional serine/threonine kinase and phosphorylase involved in the regulation of the pyruvate, phosphate dikinase (PPDK) by catalyzing its phosphorylation/dephosphorylation. The sequence is that of Putative pyruvate, phosphate dikinase regulatory protein (yqfL) from Bacillus subtilis (strain 168).